The sequence spans 543 residues: Probable protein kinase UbiB (543 aa).

In terms of domain architecture, Protein kinase spans 123-501 (DFDQQALASA…RVRQGQSRYL (379 aa)). ATP contacts are provided by residues 129 to 137 (LASASIAQV) and lysine 152. Aspartate 287 functions as the Proton acceptor in the catalytic mechanism. A run of 2 helical transmembrane segments spans residues 498–518 (SRYL…LLSG) and 519–539 (DVEV…VIGW).

The protein belongs to the ABC1 family. UbiB subfamily.

It is found in the cell inner membrane. It participates in cofactor biosynthesis; ubiquinone biosynthesis [regulation]. Functionally, is probably a protein kinase regulator of UbiI activity which is involved in aerobic coenzyme Q (ubiquinone) biosynthesis. The polypeptide is Probable protein kinase UbiB (Serratia proteamaculans (strain 568)).